A 182-amino-acid polypeptide reads, in one-letter code: uncharacterized protein (182 aa).

One can recognise a Macro domain in the interval 1–177 (MEFSVGGVEV…KFLEVFKKHL (177 aa)).

This is an uncharacterized protein from Pyrobaculum aerophilum (strain ATCC 51768 / DSM 7523 / JCM 9630 / CIP 104966 / NBRC 100827 / IM2).